Consider the following 341-residue polypeptide: N-acetyl-gamma-glutamyl-phosphate reductase (341 aa).

Cys147 is a catalytic residue.

This sequence belongs to the NAGSA dehydrogenase family. Type 1 subfamily.

It localises to the cytoplasm. It catalyses the reaction N-acetyl-L-glutamate 5-semialdehyde + phosphate + NADP(+) = N-acetyl-L-glutamyl 5-phosphate + NADPH + H(+). It functions in the pathway amino-acid biosynthesis; L-arginine biosynthesis; N(2)-acetyl-L-ornithine from L-glutamate: step 3/4. Functionally, catalyzes the NADPH-dependent reduction of N-acetyl-5-glutamyl phosphate to yield N-acetyl-L-glutamate 5-semialdehyde. In Dehalococcoides mccartyi (strain ATCC BAA-2100 / JCM 16839 / KCTC 5957 / BAV1), this protein is N-acetyl-gamma-glutamyl-phosphate reductase.